A 171-amino-acid chain; its full sequence is Small ribosomal subunit protein uS5 (171 aa).

The 64-residue stretch at 13–76 (FLERLVAVNR…DQAKKNLVTI (64 aa)) folds into the S5 DRBM domain.

It belongs to the universal ribosomal protein uS5 family. Part of the 30S ribosomal subunit. Contacts proteins S4 and S8.

Functionally, with S4 and S12 plays an important role in translational accuracy. In terms of biological role, located at the back of the 30S subunit body where it stabilizes the conformation of the head with respect to the body. The protein is Small ribosomal subunit protein uS5 of Dichelobacter nodosus (strain VCS1703A).